A 312-amino-acid polypeptide reads, in one-letter code: MKSDKPFLERYFYDPTLLQKGLIFALYPFSLIYQGIATIKRKTAKKHDFKIPLISIGNLIAGGSGKTPFILEIAPRYQEVAIVSRGYQRDSKGLVVVSVKGNILVPQQTAGDEAYLLALNLKQASVIVSEKRELGVLKALELGAKIVFLDDGFRFNFNQFNALLKPKIPPYYPFCLPSGLYRESIKSYKEAHLVITEDKDYQRITSISHPTKRMLLVTAIANPSRLDAFLPKEVVKKLYFKDHALFDLKLLEKEFYQNSATSLLVTSKDLVKLQDCSLPLSVLDLKLEIDPKILEKIDRYILSYPCNTKERL.

Position 60–67 (60–67) interacts with ATP; that stretch reads IAGGSGKT.

It belongs to the LpxK family.

It carries out the reaction a lipid A disaccharide + ATP = a lipid IVA + ADP + H(+). It participates in glycolipid biosynthesis; lipid IV(A) biosynthesis; lipid IV(A) from (3R)-3-hydroxytetradecanoyl-[acyl-carrier-protein] and UDP-N-acetyl-alpha-D-glucosamine: step 6/6. Transfers the gamma-phosphate of ATP to the 4'-position of a tetraacyldisaccharide 1-phosphate intermediate (termed DS-1-P) to form tetraacyldisaccharide 1,4'-bis-phosphate (lipid IVA). The chain is Tetraacyldisaccharide 4'-kinase from Helicobacter pylori (strain HPAG1).